A 430-amino-acid chain; its full sequence is Adenylosuccinate synthetase (430 aa).

GTP contacts are provided by residues 12-18 (GDEGKGK) and 40-42 (GHT). The Proton acceptor role is filled by Asp-13. Mg(2+) is bound by residues Asp-13 and Gly-40. Residues 13–16 (DEGK), 38–41 (NAGH), Thr-130, Arg-144, Gln-224, Thr-239, and Arg-303 each bind IMP. Residue His-41 is the Proton donor of the active site. 299-305 (VNTGRKR) contacts substrate. Residues Arg-305, 331 to 333 (KLD), and 413 to 415 (STS) contribute to the GTP site.

It belongs to the adenylosuccinate synthetase family. As to quaternary structure, homodimer. Mg(2+) is required as a cofactor.

The protein resides in the cytoplasm. It carries out the reaction IMP + L-aspartate + GTP = N(6)-(1,2-dicarboxyethyl)-AMP + GDP + phosphate + 2 H(+). It functions in the pathway purine metabolism; AMP biosynthesis via de novo pathway; AMP from IMP: step 1/2. In terms of biological role, plays an important role in the de novo pathway of purine nucleotide biosynthesis. Catalyzes the first committed step in the biosynthesis of AMP from IMP. In Rhodopseudomonas palustris (strain TIE-1), this protein is Adenylosuccinate synthetase.